Reading from the N-terminus, the 154-residue chain is Large ribosomal subunit protein uL13 (154 aa).

This sequence belongs to the universal ribosomal protein uL13 family. In terms of assembly, part of the 50S ribosomal subunit.

Its function is as follows. This protein is one of the early assembly proteins of the 50S ribosomal subunit, although it is not seen to bind rRNA by itself. It is important during the early stages of 50S assembly. The sequence is that of Large ribosomal subunit protein uL13 from Brucella suis (strain ATCC 23445 / NCTC 10510).